The primary structure comprises 290 residues: MFKEYVSLTKPGIIMGNLISVLAGYFLAAKSESITLSLLVYTMLGVALVIASGCVVNNIFDRDIDAKMSRTRNRAIVTGSINIEFAFLFAIIMLLIGTGLLYKMANPLSAVMVLLGYVFYVFFYTMWYKRTSVYGTLVGSVSGAIPPLVGYLAVTNYLSLEAVLLFGLFCLWQMPHSYAIAMFRMKDYQQANIPVLPLVKGIQKARQHIMIYVLVFSVVALGLYAFGHTGYEYLAVVAISCYGWFKVTYRNMDESNYVQWSKSVFKTSLLAITAFSTVLGIELLPFSITF.

The next 9 helical transmembrane spans lie at 8 to 28 (LTKP…YFLA), 36 to 56 (LSLL…GCVV), 81 to 101 (INIE…TGLL), 108 to 128 (LSAV…TMWY), 133 to 153 (VYGT…GYLA), 163 to 183 (VLLF…IAMF), 209 to 229 (IMIY…FGHT), 230 to 247 (GYEY…WFKV), and 270 to 290 (LAIT…SITF).

This sequence belongs to the UbiA prenyltransferase family. Protoheme IX farnesyltransferase subfamily.

The protein resides in the cell inner membrane. The enzyme catalyses heme b + (2E,6E)-farnesyl diphosphate + H2O = Fe(II)-heme o + diphosphate. Its pathway is porphyrin-containing compound metabolism; heme O biosynthesis; heme O from protoheme: step 1/1. Functionally, converts heme B (protoheme IX) to heme O by substitution of the vinyl group on carbon 2 of heme B porphyrin ring with a hydroxyethyl farnesyl side group. The protein is Protoheme IX farnesyltransferase of Aliivibrio salmonicida (strain LFI1238) (Vibrio salmonicida (strain LFI1238)).